A 236-amino-acid polypeptide reads, in one-letter code: Snake venom serine protease pallase (236 aa).

The region spanning 1–227 (VIGGDECNIN…HLDWIENIIA (227 aa)) is the Peptidase S1 domain. 6 disulfides stabilise this stretch: cysteine 7-cysteine 139, cysteine 26-cysteine 42, cysteine 74-cysteine 234, cysteine 118-cysteine 188, cysteine 150-cysteine 167, and cysteine 178-cysteine 203. Active-site charge relay system residues include histidine 41 and aspartate 86. Serine 182 acts as the Charge relay system in catalysis.

This sequence belongs to the peptidase S1 family. Snake venom subfamily. In terms of assembly, monomer. Expressed by the venom gland.

It localises to the secreted. In terms of biological role, snake venom serine protease that may act in the hemostasis system of the prey. This chain is Snake venom serine protease pallase, found in Gloydius halys (Chinese water mocassin).